We begin with the raw amino-acid sequence, 359 residues long: 1-deoxy-D-xylulose 5-phosphate reductoisomerase (359 aa).

T7, G8, S9, I10, A31, N33, and N111 together coordinate NADPH. K112 contacts 1-deoxy-D-xylulose 5-phosphate. E113 provides a ligand contact to NADPH. D131 provides a ligand contact to Mn(2+). 1-deoxy-D-xylulose 5-phosphate is bound by residues S132, E133, S155, and H178. E133 lines the Mn(2+) pocket. Residue G184 participates in NADPH binding. Positions 191, 196, 197, and 200 each coordinate 1-deoxy-D-xylulose 5-phosphate. A Mn(2+)-binding site is contributed by E200.

It belongs to the DXR family. It depends on Mg(2+) as a cofactor. Requires Mn(2+) as cofactor.

The catalysed reaction is 2-C-methyl-D-erythritol 4-phosphate + NADP(+) = 1-deoxy-D-xylulose 5-phosphate + NADPH + H(+). The protein operates within isoprenoid biosynthesis; isopentenyl diphosphate biosynthesis via DXP pathway; isopentenyl diphosphate from 1-deoxy-D-xylulose 5-phosphate: step 1/6. Catalyzes the NADPH-dependent rearrangement and reduction of 1-deoxy-D-xylulose-5-phosphate (DXP) to 2-C-methyl-D-erythritol 4-phosphate (MEP). The chain is 1-deoxy-D-xylulose 5-phosphate reductoisomerase from Campylobacter hominis (strain ATCC BAA-381 / DSM 21671 / CCUG 45161 / LMG 19568 / NCTC 13146 / CH001A).